The chain runs to 494 residues: Guanosine-5'-triphosphate,3'-diphosphate pyrophosphatase (494 aa).

Belongs to the GppA/Ppx family. GppA subfamily.

It catalyses the reaction guanosine 3'-diphosphate 5'-triphosphate + H2O = guanosine 3',5'-bis(diphosphate) + phosphate + H(+). It participates in purine metabolism; ppGpp biosynthesis; ppGpp from GTP: step 2/2. Its function is as follows. Catalyzes the conversion of pppGpp to ppGpp. Guanosine pentaphosphate (pppGpp) is a cytoplasmic signaling molecule which together with ppGpp controls the 'stringent response', an adaptive process that allows bacteria to respond to amino acid starvation, resulting in the coordinated regulation of numerous cellular activities. This is Guanosine-5'-triphosphate,3'-diphosphate pyrophosphatase from Escherichia coli O6:H1 (strain CFT073 / ATCC 700928 / UPEC).